Consider the following 221-residue polypeptide: Protein-L-isoaspartate O-methyltransferase (221 aa).

Ser-70 is an active-site residue.

Belongs to the methyltransferase superfamily. L-isoaspartyl/D-aspartyl protein methyltransferase family.

It localises to the cytoplasm. The catalysed reaction is [protein]-L-isoaspartate + S-adenosyl-L-methionine = [protein]-L-isoaspartate alpha-methyl ester + S-adenosyl-L-homocysteine. Its function is as follows. Catalyzes the methyl esterification of L-isoaspartyl residues in peptides and proteins that result from spontaneous decomposition of normal L-aspartyl and L-asparaginyl residues. It plays a role in the repair and/or degradation of damaged proteins. The chain is Protein-L-isoaspartate O-methyltransferase from Alkalilimnicola ehrlichii (strain ATCC BAA-1101 / DSM 17681 / MLHE-1).